An 830-amino-acid chain; its full sequence is MVEEGVRVVRCGGSRLNFRRAVFSVDSKYIFCVSGDFVKVYSTTTEECVHILHGHTDLVSGILVNPSNHLQLYSCSFDGTIKLWDYVDGILIKTFTIGPKLHAFFIPLHAEDSVFLTISKEEPDIFQLVSVKLPKSTSQDVEARQLTFVLDYINRSPKCIAFGNEGEYVAAVRDFYLSVYFFKKKKTCNFTLPSTKNKKNAKNKFTCVACHPKEDCIASGHMDGKIRLWRNFHSDQKYTYTCLHWHHDMVMDLAFTVTGTSLLSGGRECVLVEWRDGSEKNKEFLPRLGSSIEHISVSPAGDLFCTSHSDNKITVIHRNLDASAVIQGLVKDRSISTGLMVDPRTKALVLNGKPGHLQFYSLQGDKQLYNLDIIQQEYINDEGLTQTELTKAAFGCSGTWLATVEQRQENENELELQMKLWNYSKKTQGFVLNTKIAMPHDDHITALCFNNAESYEKPILVTASRDGHFKVWILTDDSDIYKKAIAWTCDFVGSYHKYQATNCCFSEDGSLLAVSFEEIVTIWDSQTWELKCTFCQRAGKIRHLCFGRLTCSKYLLGTTDNGILCCWNLLSCSIQWSAKLNVRVMEPDPYSDHVAAVAQSSAGSDLFVFKPSEPRPLYIQKNVSREEVQWGVFVPRDVPESFTSETHQWLNRSQFYFLTKSQSLLTFSTKSPEEKLTPTSKQLLAEESLPTTPFSFILGKHRQQQGAKLTETSENELVQLPLTENIPAITELLHTPAHVLPSASFLCSLFVNSLLLSKETKSAEEVPDDVDMEGNKESDDSDEEYDLTEKDKETNNNTDLGEDAIHQLSKSEEKELRKFRKVDYSWLTAL.

9 WD repeats span residues glutamate 4–serine 42, glutamate 46–aspartate 85, glycine 89–serine 130, arginine 144–lysine 183, leucine 192–arginine 230, glutamine 236–arginine 275, serine 278–histidine 317, serine 323–serine 361, and glutamine 375–asparagine 422. Lysine 426 is covalently cross-linked (Glycyl lysine isopeptide (Lys-Gly) (interchain with G-Cter in SUMO2)). 4 WD repeats span residues glycine 429 to isoleucine 473, alanine 486 to aspartate 524, tryptophan 528 to asparagine 568, and serine 573 to lysine 610. Residues serine 663 and serine 671 each carry the phosphoserine modification. A Glycyl lysine isopeptide (Lys-Gly) (interchain with G-Cter in SUMO2) cross-link involves residue lysine 675. The tract at residues lysine 761–glutamine 807 is disordered. 2 positions are modified to phosphoserine: serine 778 and serine 781. Residue tyrosine 785 is modified to Phosphotyrosine. At serine 811 the chain carries Phosphoserine.

Component of the proposed t-UTP subcomplex of the ribosomal small subunit (SSU) processome. SSU processome is composed of more than 70 proteins and the RNA chaperone small nucleolar RNA (snoRNA) U3.

It localises to the nucleus. It is found in the nucleolus. In terms of biological role, ribosome biogenesis factor. Part of the small subunit (SSU) processome, first precursor of the small eukaryotic ribosomal subunit. During the assembly of the SSU processome in the nucleolus, many ribosome biogenesis factors, an RNA chaperone and ribosomal proteins associate with the nascent pre-rRNA and work in concert to generate RNA folding, modifications, rearrangements and cleavage as well as targeted degradation of pre-ribosomal RNA by the RNA exosome. Involved in nucleolar processing of pre-18S ribosomal RNA. Required for optimal pre-ribosomal RNA transcription by RNA polymerase I. This is WD repeat-containing protein 75 (Wdr75) from Mus musculus (Mouse).